We begin with the raw amino-acid sequence, 263 residues long: Endonuclease 8 (263 aa).

Proline 2 serves as the catalytic Schiff-base intermediate with DNA. Catalysis depends on glutamate 3, which acts as the Proton donor. Residue lysine 53 is the Proton donor; for beta-elimination activity of the active site. DNA is bound by residues glutamine 70, arginine 125, and asparagine 169. The FPG-type zinc-finger motif lies at 229–263 (KVFHRDGELCERCGGIIEKTTLSSRPFYWCPGCQH). Residue arginine 253 is the Proton donor; for delta-elimination activity of the active site.

Belongs to the FPG family. Requires Zn(2+) as cofactor.

It catalyses the reaction 2'-deoxyribonucleotide-(2'-deoxyribose 5'-phosphate)-2'-deoxyribonucleotide-DNA = a 3'-end 2'-deoxyribonucleotide-(2,3-dehydro-2,3-deoxyribose 5'-phosphate)-DNA + a 5'-end 5'-phospho-2'-deoxyribonucleoside-DNA + H(+). Involved in base excision repair of DNA damaged by oxidation or by mutagenic agents. Acts as a DNA glycosylase that recognizes and removes damaged bases. Has a preference for oxidized pyrimidines, such as thymine glycol, 5,6-dihydrouracil and 5,6-dihydrothymine. Has AP (apurinic/apyrimidinic) lyase activity and introduces nicks in the DNA strand. Cleaves the DNA backbone by beta-delta elimination to generate a single-strand break at the site of the removed base with both 3'- and 5'-phosphates. This is Endonuclease 8 from Shigella boydii serotype 4 (strain Sb227).